Here is a 426-residue protein sequence, read N- to C-terminus: Alpha-ionylideneethane synthase abl3 (426 aa).

Belongs to the alpha-ionylideneethane synthase family.

Its pathway is hormone biosynthesis. Functionally, alpha-ionylideneethane synthase; part of the gene cluster that mediates the biosynthesis of abscisic acid (ABA), a phytohormone that acts antagonistically toward salicylic acid (SA), jasmonic acid (JA) and ethylene (ETH) signaling, to impede plant defense responses. The first step of the pathway catalyzes the reaction from farnesyl diphosphate to alpha-ionylideneethane performed by the alpha-ionylideneethane synthase abl3 via a three-step reaction mechanism involving 2 neutral intermediates, beta-farnesene and allofarnesene. The cytochrome P450 monooxygenase abl1 might then be involved in the conversion of alpha-ionylideneethane to alpha-ionylideneacetic acid. Alpha-ionylideneacetic acid is further converted to abscisic acid in 2 steps involving the cytochrome P450 monooxygenase abl2 and the short-chain dehydrogenase/reductase abl4, via the intermediates 1'-deoxy-ABA or 1',4'-trans-diol-ABA, depending on the order of action of these 2 enzymes. Abl2 is responsible for the hydroxylation of carbon atom C-1' and abl4 might be involved in the oxidation of the C-4' carbon atom. This is Alpha-ionylideneethane synthase abl3 from Leptosphaeria maculans (strain JN3 / isolate v23.1.3 / race Av1-4-5-6-7-8) (Blackleg fungus).